Consider the following 794-residue polypeptide: Phenylalanine--tRNA ligase beta subunit (794 aa).

One can recognise a tRNA-binding domain in the interval 39–148 (APAFDNVVVA…SDAPVGQAIR (110 aa)). Residues 399–474 (PVRKPVLLRT…RLYGYDNIPS (76 aa)) enclose the B5 domain. Residues Asp452, Asp458, Glu461, and Glu462 each coordinate Mg(2+). One can recognise an FDX-ACB domain in the interval 700–793 (SKFPPVIRDL…FEQAFGAQLR (94 aa)).

The protein belongs to the phenylalanyl-tRNA synthetase beta subunit family. Type 1 subfamily. Tetramer of two alpha and two beta subunits. Mg(2+) serves as cofactor.

Its subcellular location is the cytoplasm. The enzyme catalyses tRNA(Phe) + L-phenylalanine + ATP = L-phenylalanyl-tRNA(Phe) + AMP + diphosphate + H(+). This chain is Phenylalanine--tRNA ligase beta subunit, found in Dechloromonas aromatica (strain RCB).